The following is a 108-amino-acid chain: Iron-sulfur cluster assembly protein CyaY (108 aa).

It belongs to the frataxin family.

In terms of biological role, involved in iron-sulfur (Fe-S) cluster assembly. May act as a regulator of Fe-S biogenesis. This chain is Iron-sulfur cluster assembly protein CyaY, found in Pseudomonas aeruginosa (strain ATCC 15692 / DSM 22644 / CIP 104116 / JCM 14847 / LMG 12228 / 1C / PRS 101 / PAO1).